Reading from the N-terminus, the 307-residue chain is MEGRLNNMWRLTVNESKFVESALQSELRVDGRGLYDYRKLTIKFGKEYGSSQVQLGQTHVMAFVTAQLVQPYKDRPSEGSFSIFTEFSPMADPSFEPGHPGESAVELGRIIDRALRESRAVDTESLCVLAGKLVWSVRIDLHILDNGGNLVDAANVAALAALMTFRRPDCTVGGDNSQDVIIHPPEEREPLPLIIHHLPIAFTFGFFNKGSILVMDPTYVEEAVMCGRMTVTVNANGDICAIQKPGEEGVNQSVILHCLRLASSRASATTKIIRDAVEAYNRERSSQKVKRHHTLAKSEVLGPIVVV.

Belongs to the RNase PH family. As to expression, expressed in roots, leaves, stems, buds and siliques.

The protein localises to the cytoplasm. It localises to the nucleus. Probable 3'-&gt;5' exoribonuclease involved in the regulation of cuticular wax biosynthesis. Can perform exosomal functions and partially complement the yeast rrp45 null mutant. The protein is Exosome complex component RRP45A of Arabidopsis thaliana (Mouse-ear cress).